Consider the following 432-residue polypeptide: Methylenetetrahydrofolate--tRNA-(uracil-5-)-methyltransferase TrmFO (432 aa).

7–12 serves as a coordination point for FAD; it reads GGGLAG.

Belongs to the MnmG family. TrmFO subfamily. FAD is required as a cofactor.

Its subcellular location is the cytoplasm. It catalyses the reaction uridine(54) in tRNA + (6R)-5,10-methylene-5,6,7,8-tetrahydrofolate + NADH + H(+) = 5-methyluridine(54) in tRNA + (6S)-5,6,7,8-tetrahydrofolate + NAD(+). The catalysed reaction is uridine(54) in tRNA + (6R)-5,10-methylene-5,6,7,8-tetrahydrofolate + NADPH + H(+) = 5-methyluridine(54) in tRNA + (6S)-5,6,7,8-tetrahydrofolate + NADP(+). Its function is as follows. Catalyzes the folate-dependent formation of 5-methyl-uridine at position 54 (M-5-U54) in all tRNAs. This is Methylenetetrahydrofolate--tRNA-(uracil-5-)-methyltransferase TrmFO from Coprothermobacter proteolyticus (strain ATCC 35245 / DSM 5265 / OCM 4 / BT).